The sequence spans 430 residues: Probable FAD-dependent monooxygenase (430 aa).

The signal sequence occupies residues 1–23; that stretch reads MGSTSTPPHVLIIGAGITGLALA. FAD is bound at residue 9–37; sequence HVLIIGAGITGLALAQALRKHGVSFAVYE. 2 N-linked (GlcNAc...) asparagine glycosylation sites follow: Asn-130 and Asn-151. 307-330 serves as a coordination point for FAD; it reads LEDWPTPPKGSWSNLGGTATLVGD.

It depends on FAD as a cofactor.

This is Probable FAD-dependent monooxygenase from Arthroderma benhamiae (strain ATCC MYA-4681 / CBS 112371) (Trichophyton mentagrophytes).